The sequence spans 447 residues: CBL-interacting serine/threonine-protein kinase 9 (447 aa).

The region spanning 19 to 274 (YEMGRTLGEG…IAELLEDEWF (256 aa)) is the Protein kinase domain. ATP is bound by residues 25–33 (LGEGSFAKV) and Lys-48. The active-site Proton acceptor is Asp-142. The interval 160-189 (DFGLSAFSRQVREDGLLHTACGTPNYVAPE) is activation loop. A Phosphoserine modification is found at Ser-164. Thr-178 bears the Phosphothreonine mark. Residues 312–336 (EKPVSMNAFELISSSSEFSLENLFE) form the NAF domain. The tract at residues 343-372 (KKETRFTSQRSASEIMSKMEETAKPLGFNV) is PPI.

It belongs to the protein kinase superfamily. CAMK Ser/Thr protein kinase family. SNF1 subfamily. Interacts with CBL2 and CBL3. Requires Mn(2+) as cofactor. As to expression, expressed at low levels in roots and shoots. Detected in root vascular bundles and in the leaf vascular tissue and hydathode, but not in root tips.

Its subcellular location is the cytoplasm. It is found in the nucleus. The enzyme catalyses L-seryl-[protein] + ATP = O-phospho-L-seryl-[protein] + ADP + H(+). It carries out the reaction L-threonyl-[protein] + ATP = O-phospho-L-threonyl-[protein] + ADP + H(+). Functionally, CIPK serine-threonine protein kinases interact with CBL proteins. Binding of a CBL protein to the regulatory NAF domain of CIPK protein lead to the activation of the kinase in a calcium-dependent manner. Involved in K(+) homeostasis under low-K(+) stress. This Arabidopsis thaliana (Mouse-ear cress) protein is CBL-interacting serine/threonine-protein kinase 9 (CIPK9).